We begin with the raw amino-acid sequence, 454 residues long: Probable diacyglycerol O-acyltransferase tgs2 (454 aa).

Catalysis depends on His-139, which acts as the Proton acceptor.

It belongs to the long-chain O-acyltransferase family.

It catalyses the reaction an acyl-CoA + a 1,2-diacyl-sn-glycerol = a triacyl-sn-glycerol + CoA. The enzyme catalyses a long chain fatty alcohol + a fatty acyl-CoA = a wax ester + CoA. It participates in glycerolipid metabolism; triacylglycerol biosynthesis. Catalyzes the terminal and only committed step in triacylglycerol synthesis by using diacylglycerol and fatty acyl CoA as substrates. Required for storage lipid synthesis. This is Probable diacyglycerol O-acyltransferase tgs2 (tgs2) from Mycobacterium tuberculosis (strain CDC 1551 / Oshkosh).